A 362-amino-acid polypeptide reads, in one-letter code: S-adenosylmethionine decarboxylase proenzyme (362 aa).

Active-site residues include Glu13 and Glu16. Residue Ser73 is the Schiff-base intermediate with substrate; via pyruvic acid of the active site. A Pyruvic acid (Ser); by autocatalysis modification is found at Ser73. The active-site Proton donor; for catalytic activity is the Cys87. Catalysis depends on proton acceptor; for processing activity residues Ser236 and His249.

The protein belongs to the eukaryotic AdoMetDC family. It depends on pyruvate as a cofactor. Is synthesized initially as an inactive proenzyme. Formation of the active enzyme involves a self-maturation process in which the active site pyruvoyl group is generated from an internal serine residue via an autocatalytic post-translational modification. Two non-identical subunits are generated from the proenzyme in this reaction, and the pyruvate is formed at the N-terminus of the alpha chain, which is derived from the carboxyl end of the proenzyme. The post-translation cleavage follows an unusual pathway, termed non-hydrolytic serinolysis, in which the side chain hydroxyl group of the serine supplies its oxygen atom to form the C-terminus of the beta chain, while the remainder of the serine residue undergoes an oxidative deamination to produce ammonia and the pyruvoyl group blocking the N-terminus of the alpha chain.

It catalyses the reaction S-adenosyl-L-methionine + H(+) = S-adenosyl 3-(methylsulfanyl)propylamine + CO2. It participates in amine and polyamine biosynthesis; S-adenosylmethioninamine biosynthesis; S-adenosylmethioninamine from S-adenosyl-L-methionine: step 1/1. The chain is S-adenosylmethionine decarboxylase proenzyme (SAMDC) from Datura stramonium (Jimsonweed).